Consider the following 210-residue polypeptide: MVLGKPQTDPTLEWFLSHCHIHKYPSKSTLIHQGEKAETLYYIVKGSVAVLIKDEEGKEMILSYLNQGDFIGELGLFEEGQERSAWVRAKTACEVAEISYKKFRQLIQVNPDILMRLSAQMARRLQVTSEKVGNLAFLDVTGRIAQTLLNLAKQPDAMTHPDGMQIKITRQEIGQIVGCSRETVGRILKMLEDQNLISAHGKTIVVYGTR.

Residues 20–22 (HIH) are activating region 2 (AR2); probably contacts the N-terminus of RpoA. An activating region 3 (AR3); probably contacts sigma-70 (RpoD) region spans residues 53–59 (KDEEGKE). 3',5'-cyclic AMP-binding positions include 57–63 (GKEMILS), 72–74 (GEL), and 83–84 (RS). N6-acetyllysine is present on Lys101. 3',5'-cyclic AMP-binding positions include 128 to 129 (TS) and 136 to 137 (AF). An HTH crp-type domain is found at 138-210 (LDVTGRIAQT…GKTIVVYGTR (73 aa)). Residues 154–163 (QPDAMTHPDG) are activating region 1 (AR1); probably contacts the C-terminus of RpoA. A 3',5'-cyclic AMP-binding site is contributed by 171–181 (QEIGQIVGCSR). The H-T-H motif DNA-binding region spans 180-186 (SRETVGR).

In terms of assembly, homodimer, which upon binding cAMP is able to bind DNA. Binds the N- and C-terminus of RNA polymerase subunit RpoA and sigma-70 (RpoD).

Its function is as follows. A global transcription regulator. Complexes with cyclic AMP (cAMP) which allosterically activates DNA binding to regulate transcription. It can act as an activator, repressor, coactivator or corepressor. Induces a severe bend in DNA. Acts as a negative regulator of its own synthesis as well as for adenylate cyclase (cyaA), which generates cAMP. Plays a major role in carbon catabolite repression (CCR). The sequence is that of cAMP-activated global transcriptional regulator CRP (crp) from Escherichia coli O157:H7.